A 510-amino-acid chain; its full sequence is ATP synthase subunit alpha (510 aa).

Position 169–176 (169–176 (GDRQTGKT)) interacts with ATP.

It belongs to the ATPase alpha/beta chains family. F-type ATPases have 2 components, CF(1) - the catalytic core - and CF(0) - the membrane proton channel. CF(1) has five subunits: alpha(3), beta(3), gamma(1), delta(1), epsilon(1). CF(0) has three main subunits: a(1), b(2) and c(9-12). The alpha and beta chains form an alternating ring which encloses part of the gamma chain. CF(1) is attached to CF(0) by a central stalk formed by the gamma and epsilon chains, while a peripheral stalk is formed by the delta and b chains.

Its subcellular location is the cell inner membrane. The enzyme catalyses ATP + H2O + 4 H(+)(in) = ADP + phosphate + 5 H(+)(out). Produces ATP from ADP in the presence of a proton gradient across the membrane. The alpha chain is a regulatory subunit. This Rickettsia massiliae (strain Mtu5) protein is ATP synthase subunit alpha.